A 428-amino-acid chain; its full sequence is C4-dicarboxylate transport protein (428 aa).

8 consecutive transmembrane segments (helical) span residues 8–28 (VLYV…HLYP), 44–64 (LIKM…IAGM), 78–98 (LLYF…ATHI), 148–168 (GEIL…AHLG), 184–204 (VLFG…FGAM), 222–242 (LIGT…GAIA), 307–327 (IYMT…LTWM), and 355–375 (AATL…ILGI).

The protein belongs to the dicarboxylate/amino acid:cation symporter (DAACS) (TC 2.A.23) family.

The protein localises to the cell inner membrane. Functionally, responsible for the transport of dicarboxylates such as succinate, fumarate, and malate from the periplasm across the membrane. This chain is C4-dicarboxylate transport protein, found in Burkholderia thailandensis (strain ATCC 700388 / DSM 13276 / CCUG 48851 / CIP 106301 / E264).